We begin with the raw amino-acid sequence, 212 residues long: ATP-dependent dethiobiotin synthetase BioD (212 aa).

10–15 (GVGKTF) contributes to the ATP binding site. Thr14 serves as a coordination point for Mg(2+). Lys36 is an active-site residue. Residue Ser40 participates in substrate binding. Residues Asp45, 106–109 (EGAG), and 167–168 (NC) each bind ATP. Positions 45 and 106 each coordinate Mg(2+).

The protein belongs to the dethiobiotin synthetase family. Homodimer. Mg(2+) is required as a cofactor.

The protein localises to the cytoplasm. The enzyme catalyses (7R,8S)-7,8-diammoniononanoate + CO2 + ATP = (4R,5S)-dethiobiotin + ADP + phosphate + 3 H(+). Its pathway is cofactor biosynthesis; biotin biosynthesis; biotin from 7,8-diaminononanoate: step 1/2. Catalyzes a mechanistically unusual reaction, the ATP-dependent insertion of CO2 between the N7 and N8 nitrogen atoms of 7,8-diaminopelargonic acid (DAPA, also called 7,8-diammoniononanoate) to form a ureido ring. The protein is ATP-dependent dethiobiotin synthetase BioD of Methanococcus aeolicus (strain ATCC BAA-1280 / DSM 17508 / OCM 812 / Nankai-3).